The chain runs to 583 residues: NEDD4-binding protein 2-like 2 (583 aa).

Positions 162–197 form a coiled coil; sequence NSEKSEIDNELFQFYKEIEELEKEKDGFENSCKESE. Residues 549–575 form a disordered region; the sequence is EPSHKSTQRPPPPQGRQRWGGSLGSHN.

The protein is NEDD4-binding protein 2-like 2 (N4BP2L2) of Homo sapiens (Human).